The following is a 302-amino-acid chain: Merozoite surface protein 2 (302 aa).

Residues 1 to 20 form the signal peptide; that stretch reads MKVIKTLSIINFFIFVTFNI. N-linked (GlcNAc...) asparagine glycosylation is found at Asn-22 and Asn-36. Residues 44–228 form a polymorphic region region; the sequence is EESKPPTGAV…EQTESPELQS (185 aa). The 1; partial repeat unit spans residues 55–60; sequence GSGAGA. An 8 X 8 AA tandem repeats of G-S-G-A-G-A-V-A region spans residues 55–113; that stretch reads GSGAGAGSGAGAVAGSGAGAVAGSGAGAVAGSGAGAVAGSGAGAVAGSGAGAVAGSGAG. 6 repeat units span residues 61–68, 69–76, 77–84, 85–92, 93–100, and 101–108. One copy of the 8; partial repeat lies at 109 to 113; that stretch reads GSGAG. Residues 114–263 are disordered; the sequence is NGANPGADAE…DSQKECTDGN (150 aa). Residues 125–150 are compositionally biased toward low complexity; that stretch reads SPSTPATTTTTTTTNDAEASTSTSSE. The span at 151 to 167 shows a compositional bias: basic and acidic residues; that stretch reads NRNHNNAETNPKGKGEV. Composition is skewed to polar residues over residues 169-195 and 202-230; these read KPNQ…NVPR and KSPT…QSAP. N-linked (GlcNAc...) asparagine glycosylation is present at Asn-179. Asn-251 carries an N-linked (GlcNAc...) asparagine glycan. Cys-259 and Cys-267 are disulfide-bonded. N-linked (GlcNAc...) asparagine glycosylation is found at Asn-275 and Asn-276. The GPI-anchor amidated asparagine moiety is linked to residue Asn-276. The propeptide at 277–302 is removed in mature form; that stretch reads SSNIASINKFVVLISATLVLSFAIFI.

Its subcellular location is the cell membrane. In terms of biological role, may play a role in the merozoite attachment to the erythrocyte. The protein is Merozoite surface protein 2 of Plasmodium falciparum (isolate tak 9).